The sequence spans 433 residues: Glutamate-1-semialdehyde 2,1-aminomutase (433 aa).

Lys-273 is modified (N6-(pyridoxal phosphate)lysine).

The protein belongs to the class-III pyridoxal-phosphate-dependent aminotransferase family. HemL subfamily. As to quaternary structure, homodimer. It depends on pyridoxal 5'-phosphate as a cofactor.

Its subcellular location is the cytoplasm. It carries out the reaction (S)-4-amino-5-oxopentanoate = 5-aminolevulinate. The protein operates within porphyrin-containing compound metabolism; protoporphyrin-IX biosynthesis; 5-aminolevulinate from L-glutamyl-tRNA(Glu): step 2/2. The sequence is that of Glutamate-1-semialdehyde 2,1-aminomutase from Polynucleobacter necessarius subsp. necessarius (strain STIR1).